We begin with the raw amino-acid sequence, 148 residues long: Proline-rich protein 13 (148 aa).

Residues 1-148 form a disordered region; that stretch reads MWNPNAGQPG…SSSSSSSDSD (148 aa). Pro residues-rich tracts occupy residues 27-67 and 75-93; these read AHPP…PQPG and GPYP…PVNP. Positions 109 to 135 are enriched in basic residues; it reads MQKKMKKAHKKMHKHQKHHKYHKHGKH. A compositionally biased stretch (low complexity) spans 136 to 148; the sequence is SSSSSSSSSSDSD.

The protein resides in the nucleus. In terms of biological role, negatively regulates TSP1 expression at the level of transcription. This down-regulation was shown to reduce taxane-induced apoptosis. This is Proline-rich protein 13 (PRR13) from Homo sapiens (Human).